A 172-amino-acid chain; its full sequence is Early E3 18.5 kDa glycoprotein (172 aa).

Residues 1 to 19 form the signal peptide; the sequence is MGAILVVLALLSLLGLGSA. The Lumenal portion of the chain corresponds to 20–136; sequence NLNPLDHDPC…SKENIVAFSI (117 aa). N-linked (GlcNAc...) asparagine; by host glycosylation is present at N36. Cystine bridges form between C37–C55 and C49–C111. N-linked (GlcNAc...) asparagine; by host glycosylation is found at N68, N72, and N102. Residues 137–157 traverse the membrane as a helical segment; sequence AYCLVTCIITAIICVCIHLLI. At 158 to 172 the chain is on the cytoplasmic side; sequence VIRPRQSNEEKEKMP. Residues 168–172 carry the Di-lysine motif motif; it reads KEKMP.

This sequence belongs to the adenoviridae E19 family. Both disulfide bonds are absolutely critical for the interaction with MHC antigens. Post-translationally, N-glycosylated; high-mannose.

Its subcellular location is the host endoplasmic reticulum membrane. Its function is as follows. Binds and retains class I heavy chains in the endoplasmic reticulum during the early period of virus infection, thereby impairing their transport to the cell surface. Also delays the expression of class I alleles that it cannot affect by direct retention. Binds transporters associated with antigen processing (TAP) and acts as a tapasin inhibitor, preventing class I/TAP association. In consequence, infected cells are masked for immune recognition by cytotoxic T-lymphocytes. The chain is Early E3 18.5 kDa glycoprotein from Human adenovirus B serotype 3 (HAdV-3).